The primary structure comprises 91 residues: DNA-binding protein HRL18 (91 aa).

Belongs to the bacterial histone-like protein family.

Its function is as follows. Histone-like DNA-binding protein which is capable of wrapping DNA to stabilize it, and thus to prevent its denaturation under extreme environmental conditions. The protein is DNA-binding protein HRL18 of Rhizobium leguminosarum.